The sequence spans 739 residues: Nucleoprotein (739 aa).

Residues 334 to 363 adopt a coiled-coil conformation; sequence VNVGEQYQQLREAATEAEKQLQQYAESREL. Positions 415–646 are disordered; that stretch reads PKTSGHYDDD…QDSDNTQPEH (232 aa). Low complexity-rich tracts occupy residues 449 to 458 and 504 to 514; these read SQDTTIPDVV and KGGQQKNSQKG. The segment covering 520-530 has biased composition (polar residues); it reads RQTQSRPTQNI. Positions 567–579 are enriched in acidic residues; it reads EEADPLDDADDET. The span at 611-638 shows a compositional bias: basic and acidic residues; that stretch reads YRDHSEKKELPQDERQDQDHTQEARNQD.

The protein belongs to the filoviruses nucleoprotein family. As to quaternary structure, homooligomer. Homomultimerizes to form the nucleocapsid. Binds to viral genomic RNA. Interacts with VP35 and VP30 to form the nucleocapsid. Interacts with host PPP2R5C; this interaction leads to VP30 dephosphorylation and viral transcription. Interacts with VP24; this interaction facilitates nucleocapsid assembly and genome packaging. Interacts with matrix protein VP40; this interaction allows recruitment of the nucleocapsid into progeny virions. Interacts with host STAU1. Interacts with host NXF1 (via RNA-binding domain); this interaction recruits NXF1 to the inclusion bodies were viral replication takes place, probably to export viral mRNA-NXF1 complexes from these sites. Interacts with host CCDC92; this interaction sequesters NP in the host cytoplasm. Interacts with host TRIM14. Post-translationally, phosphorylated and O-glycosylated by host. Acetylated by host EP300 in vitro.

The protein localises to the virion. It localises to the host cytoplasm. Its function is as follows. Oligomerizes into helical capsid to encapsidate the viral genome, protecting it from nucleases and the cellular innate immune response. VP35 binds to and stabilizes monomeric NP, keeping it soluble. Upon virus replication, NP is recruited to bind cooperatively viral genomic RNA and VP35 is released. The encapsidated genomic RNA is termed the nucleocapsid and serves as template for transcription and replication. The nucleocapsid is helical with a pitch of 10.81 NP per turn and a diameter of about 22nm. Each NP binds to six nucleotides of viral genomic RNA, three being exposed to the solvant and three hidden into the nucleocapsid. Also recruits host PPP2R5C phosphatase to dephosphorylate VP30 and thereby promote viral transcription. Upon virion assembly and budding, NP binds to VP24 and possibly host STAU1. This chain is Nucleoprotein (NP), found in Zaire ebolavirus (strain Gabon-94) (ZEBOV).